A 349-amino-acid chain; its full sequence is Ornithine carbamoyltransferase, mitochondrial (349 aa).

Carbamoyl phosphate-binding positions include 73-76 (STRT), Arg-124, His-151, and Gln-154. L-ornithine-binding residues include Asn-195, Asp-261, Ser-265, and Met-266. Catalysis depends on Cys-303, which acts as the Proton acceptor. Carbamoyl phosphate-binding positions include 303–304 (CL) and Arg-330.

It belongs to the aspartate/ornithine carbamoyltransferase superfamily. OTCase family. Homotrimer.

The protein resides in the mitochondrion matrix. The catalysed reaction is carbamoyl phosphate + L-ornithine = L-citrulline + phosphate + H(+). It participates in amino-acid biosynthesis; L-arginine biosynthesis; L-arginine from L-ornithine and carbamoyl phosphate: step 1/3. The protein is Ornithine carbamoyltransferase, mitochondrial of Coccidioides immitis (strain RS) (Valley fever fungus).